The chain runs to 904 residues: Translation initiation factor IF-2 (904 aa).

3 disordered regions span residues 103–122 (YVKS…PDEE), 137–252 (NLEE…MVAG), and 267–315 (HLSA…FERP). Positions 137 to 177 (NLEEQQRLAESDRVRDEAIQRKREEEQAAKDRAEAERKAAE) are enriched in basic and acidic residues. 2 stretches are compositionally biased toward low complexity: residues 178 to 230 (EAAA…AAPA) and 280 to 293 (RGKP…SSSR). The tr-type G domain maps to 403-572 (SRPPVVTIMG…SLQAEVLELK (170 aa)). The interval 412-419 (GHVDHGKT) is G1. Residue 412-419 (GHVDHGKT) participates in GTP binding. Residues 437–441 (GITQH) form a G2 region. A G3 region spans residues 458–461 (DTPG). GTP-binding positions include 458–462 (DTPGH) and 512–515 (NKID). Residues 512-515 (NKID) are G4. Positions 548–550 (SAK) are G5.

Belongs to the TRAFAC class translation factor GTPase superfamily. Classic translation factor GTPase family. IF-2 subfamily.

It is found in the cytoplasm. One of the essential components for the initiation of protein synthesis. Protects formylmethionyl-tRNA from spontaneous hydrolysis and promotes its binding to the 30S ribosomal subunits. Also involved in the hydrolysis of GTP during the formation of the 70S ribosomal complex. The chain is Translation initiation factor IF-2 from Xanthomonas euvesicatoria pv. vesicatoria (strain 85-10) (Xanthomonas campestris pv. vesicatoria).